The sequence spans 432 residues: D-amino acid dehydrogenase (432 aa).

Position 3–17 (3–17) interacts with FAD; it reads VVILGSGVVGVTSAW.

It belongs to the DadA oxidoreductase family. It depends on FAD as a cofactor.

The enzyme catalyses a D-alpha-amino acid + A + H2O = a 2-oxocarboxylate + AH2 + NH4(+). The protein operates within amino-acid degradation; D-alanine degradation; NH(3) and pyruvate from D-alanine: step 1/1. In terms of biological role, oxidative deamination of D-amino acids. The sequence is that of D-amino acid dehydrogenase from Escherichia fergusonii (strain ATCC 35469 / DSM 13698 / CCUG 18766 / IAM 14443 / JCM 21226 / LMG 7866 / NBRC 102419 / NCTC 12128 / CDC 0568-73).